We begin with the raw amino-acid sequence, 97 residues long: MRQLLLLPIRFYQYAISPMMASHCRHYPTCSQYAVEAIQHHGPLKGGYLATARLLRCHPWAEGGYDPVPGTELNTAPRSGQACNPTESTHSTTQTRH.

Positions 68 to 97 are disordered; it reads VPGTELNTAPRSGQACNPTESTHSTTQTRH. The span at 72–97 shows a compositional bias: polar residues; sequence ELNTAPRSGQACNPTESTHSTTQTRH.

This sequence belongs to the UPF0161 family.

It is found in the cell inner membrane. Its function is as follows. Could be involved in insertion of integral membrane proteins into the membrane. The protein is Putative membrane protein insertion efficiency factor of Marinobacter nauticus (strain ATCC 700491 / DSM 11845 / VT8) (Marinobacter aquaeolei).